The primary structure comprises 988 residues: RecQ-like DNA helicase blm-1 (988 aa).

Residues 46 to 119 are disordered; sequence CEEREEEYID…QFPSRPQKRL (74 aa). 2 repeat units span residues 121–129 and 130–138. Residues 121-138 are 2 X 9 AA tandem repeats of [DE]-P-P-I-V-D-L-D-[ED]; the sequence is DPPIVDLDEEPPIVDLDD. A disordered region spans residues 148 to 185; it reads TSEEVVSGDIAPEEEEEEGHDSFDDFESVPAQPPSKNT. Acidic residues predominate over residues 158–174; it reads APEEEEEEGHDSFDDFE. Residues 248-252 and 272-276 each bind ATP; these read FRHRQ and GAGKS. A Helicase ATP-binding domain is found at 256–433; the sequence is ILSTLMGHDT…RDHLKMQNSK (178 aa). A DEAH box motif is present at residues 375–378; that stretch reads DEAH. The 146-residue stretch at 458–603 folds into the Helicase C-terminal domain; it reads NVVEKMKQLY…VRSMHLNNVL (146 aa). The interval 478–480 is 3' overhang DNA-binding; the sequence is SRK. R562 is a binding site for ATP. The segment at 580–583 is 3' overhang DNA-binding; it reads RLRR. Zn(2+) contacts are provided by C615, C633, C640, and C643. 3' overhang DNA-binding stretches follow at residues 676–678, 687–691, and 736–742; these read TLK, ALIKK, and YSVPNQA. In terms of domain architecture, HRDC spans 807 to 888; it reads GDVFTRCLQD…ATYWKQVDER (82 aa). Residues 930 to 988 are disordered; the sequence is GGGGCRGRGKKRAFSGFSSGRATKKPRATAPSARGKTSGRGGAKPATSLKRNMYPATSM. Positions 939–955 match the Nuclear localization signal motif; sequence KKRAFSGFSSGRATKKP.

It belongs to the helicase family. RecQ subfamily. In terms of assembly, monomer. Homodimer (via N-terminus). Homotetramer (via N-terminus); dimer of dimers. Homohexamer (via N-terminus). Self-association negatively regulates DNA unwinding amplitude and rate. Oligomer forms dissociate into monomer in presence of ATP. Component of the BTR double Holliday Junction dissolution complex composed of at least him-6, top-3, rmh-1 and rmif-2, which is involved in double strand break repair in the germline. May interact with rmh-1; the interaction is required for mutual stability and localization at nuclear foci. Forms a complex composed of cdc-48.1, him-6 and crp-1; within the complex, interacts with cdc-48.1. Zn(2+) is required as a cofactor.

Its subcellular location is the nucleus. It localises to the chromosome. It catalyses the reaction Couples ATP hydrolysis with the unwinding of duplex DNA by translocating in the 3'-5' direction.. The catalysed reaction is ATP + H2O = ADP + phosphate + H(+). Its function is as follows. Component of the BTR double Holliday Junction dissolution complex, which is involved in homologous recombination during meiotic double strand break in the germline. Stabilizes and positively regulates the localization of the BTR double Holliday Junction dissolution complex component rmh-1 at nuclear foci during meiotic recombination. Participates in DNA replication and repair. Exhibits a magnesium-dependent ATP-dependent DNA-helicase activity that unwinds single- and double-stranded DNA in a 3'-5' direction. Negatively regulates sister chromatid exchange (SCE). ATP-dependent DNA helicase that unwinds single- and double-stranded DNA in a 3'-5' direction. Participates in DNA replication and repair. Negatively regulates sister chromatid exchange (SCE). Stimulates DNA 4-way junction branch migration and DNA Holliday junction dissolution. Binds single-stranded DNA (ssDNA), forked duplex DNA and DNA Holliday junction. The polypeptide is RecQ-like DNA helicase blm-1 (Caenorhabditis elegans).